A 124-amino-acid polypeptide reads, in one-letter code: Urease subunit beta (124 aa).

Belongs to the urease beta subunit family. Heterotrimer of UreA (gamma), UreB (beta) and UreC (alpha) subunits. Three heterotrimers associate to form the active enzyme.

It is found in the cytoplasm. The catalysed reaction is urea + 2 H2O + H(+) = hydrogencarbonate + 2 NH4(+). It participates in nitrogen metabolism; urea degradation; CO(2) and NH(3) from urea (urease route): step 1/1. This chain is Urease subunit beta, found in Bacillus subtilis (strain 168).